The chain runs to 136 residues: Endonuclease II (136 aa).

A GIY-YIG domain is found at 32-131 (KYNVIYAIAI…IKLFNPPWNI (100 aa)).

In terms of assembly, homotetramer. Mg(2+) serves as cofactor.

It carries out the reaction Endonucleolytic nicking and cleavage of cytosine-containing double-stranded DNA.. In terms of biological role, contributes to the degradation of host DNA, permitting the scavenging of host-derived nucleotides for phage DNA synthesis. Sequence-specific endonuclease. Catalyzes nicking of the bottom strand of double-stranded DNA between the first and second base pair to the right of a top-strand CCGC motif. Does not cleave native phage DNA, which contains 5-hydroxymethylcytosine instead of cytosine. The sequence is that of Endonuclease II (denA) from Escherichia coli (Bacteriophage T4).